The following is a 65-amino-acid chain: Large ribosomal subunit protein bL35 (65 aa).

Residues 1–26 form a disordered region; the sequence is MPKIKTLRSAAKRFKKTESGKFKRKQ.

It belongs to the bacterial ribosomal protein bL35 family.

This is Large ribosomal subunit protein bL35 from Buchnera aphidicola subsp. Baizongia pistaciae (strain Bp).